We begin with the raw amino-acid sequence, 262 residues long: Tryptophan synthase alpha chain (262 aa).

Residues Glu-48 and Asp-59 each act as proton acceptor in the active site.

This sequence belongs to the TrpA family. As to quaternary structure, tetramer of two alpha and two beta chains.

The catalysed reaction is (1S,2R)-1-C-(indol-3-yl)glycerol 3-phosphate + L-serine = D-glyceraldehyde 3-phosphate + L-tryptophan + H2O. Its pathway is amino-acid biosynthesis; L-tryptophan biosynthesis; L-tryptophan from chorismate: step 5/5. The alpha subunit is responsible for the aldol cleavage of indoleglycerol phosphate to indole and glyceraldehyde 3-phosphate. This Helicobacter pylori (strain Shi470) protein is Tryptophan synthase alpha chain.